The sequence spans 246 residues: MAGHSKWHNIQHRKGIQDVKRGKIFAKFIKEIIIATKTGGSVIENNPSLRMVIDRALAANMKRNTIENAVKRGSCDLDDKNYDEVRYEGYGLAGTAIIVDTLTDNRNRTVANIRHAFSKYGGNLSIEGSVSYLFIKQGFINFETGDEEQIMEVALDAGAKDIITNDNGSIYVITTTEDFFTIRNTLITARLEPSHSEVTMKPINYIKLNLHNTEKFIKLTDSLKDLDDTREVYHNADISDEIITQF.

It belongs to the TACO1 family.

It localises to the cytoplasm. The polypeptide is Probable transcriptional regulatory protein COSY_0365 (Vesicomyosocius okutanii subsp. Calyptogena okutanii (strain HA)).